A 154-amino-acid chain; its full sequence is Probable archaeosortase D (154 aa).

A run of 4 helical transmembrane segments spans residues 6-26, 57-77, 91-111, and 125-145; these read AIYILRFLIYFFIFYYILKML, IIEISSPCTCSLEMALFLGYI, YSVFGLSIITISNILRIILII, and VISFIIFPIALFLNWFWIYLL. C64 functions as the Acyl-thioester intermediate in the catalytic mechanism. R106 serves as the catalytic Proton donor.

This sequence belongs to the exosortase/archaeosortase family. Archaeosortase D subfamily.

It localises to the cell membrane. Transpeptidase that recognizes and modifies its substrate by proteolytic cleavage of a sorting signal. Following cleavage, a covalent intermediate is formed via a thioester bond between the archaeosortase and its substrate, which is then transferred and covalently attached to the cell membrane. The protein is Probable archaeosortase D of Methanocaldococcus jannaschii (strain ATCC 43067 / DSM 2661 / JAL-1 / JCM 10045 / NBRC 100440) (Methanococcus jannaschii).